The following is a 187-amino-acid chain: MIKSVIAGAVAMAVVSFGANAAASIPQGQGEVSFKGTVVDAPCGIETQSAKQEIDFGQISKSFLQEGGETQPKDLNIKLVNCDITNLKQLQGGAAKKGTVSLTFSGVPAENADDMLQTVGDTNTAIVVTDSSGKRVKFDGATETGASNLINGDNTIHFTAFVKKDNSGKNVAEGAFSAVANFNLTYQ.

The first 21 residues, 1-21 (MIKSVIAGAVAMAVVSFGANA), serve as a signal peptide directing secretion. A disulfide bridge links Cys-43 with Cys-82.

Belongs to the fimbrial protein family.

The protein localises to the fimbrium. Functionally, fimbriae (also called pili), polar filaments radiating from the surface of the bacterium to a length of 0.5-1.5 micrometers and numbering 100-300 per cell, enable bacteria to colonize the epithelium of specific host organs. The chain is KS71A fimbrillin (KS71A) from Escherichia coli.